A 223-amino-acid chain; its full sequence is Glutelin-2 (223 aa).

A signal peptide spans 1 to 19 (MRVLLVALALLALAASATS). 10 tandem repeats follow at residues 31 to 36 (PPPVHL), 37 to 42 (PPPVHL), 43 to 48 (PPPVHL), 49 to 54 (PPPVHL), 55 to 60 (PPPVHL), 61 to 66 (PPPVHL), 67 to 72 (PPPVHV), 73 to 78 (PPPVHL), 97 to 104 (QPHPCPCQ), and 105 to 112 (QPHPSPCQ). Positions 31-78 (PPPVHLPPPVHLPPPVHLPPPVHLPPPVHLPPPVHLPPPVHVPPPVHL) are 8 X 6 AA tandem repeats of P-P-P-V-H-L. The interval 97-112 (QPHPCPCQQPHPSPCQ) is 2 X 8 AA tandem repeats of Q-P-H-P-C-P-C-Q.

Belongs to the gliadin/glutenin family.

It localises to the vacuole. The protein resides in the aleurone grain membrane. In terms of biological role, seed storage protein. It accounts for about 15% of the total endosperm protein content. In Zea mays (Maize), this protein is Glutelin-2.